Reading from the N-terminus, the 292-residue chain is Small ribosomal subunit biogenesis GTPase RsgA (292 aa).

In terms of domain architecture, CP-type G spans 62–213 (KNSLVRPPIV…IADTPGFSSL (152 aa)). GTP is bound by residues 111–114 (SKMD) and 156–164 (GQTGVGKST). Zn(2+)-binding residues include Cys237, Cys242, His244, and Cys250.

Belongs to the TRAFAC class YlqF/YawG GTPase family. RsgA subfamily. As to quaternary structure, monomer. Associates with 30S ribosomal subunit, binds 16S rRNA. Zn(2+) serves as cofactor.

Its subcellular location is the cytoplasm. One of several proteins that assist in the late maturation steps of the functional core of the 30S ribosomal subunit. Helps release RbfA from mature subunits. May play a role in the assembly of ribosomal proteins into the subunit. Circularly permuted GTPase that catalyzes slow GTP hydrolysis, GTPase activity is stimulated by the 30S ribosomal subunit. The chain is Small ribosomal subunit biogenesis GTPase RsgA from Streptococcus pneumoniae serotype 4 (strain ATCC BAA-334 / TIGR4).